The following is a 248-amino-acid chain: DnaA regulatory inactivator Hda (248 aa).

It belongs to the DnaA family. HdA subfamily. In terms of assembly, the active form seems to be an ADP-bound monomer. Forms the RIDA complex (regulatory inactivation of DnaA) of ATP-DnaA, ADP-Hda and the DNA-loaded beta sliding clamp (dnaN).

Its function is as follows. Mediates the interaction of DNA replication initiator protein DnaA with DNA polymerase subunit beta sliding clamp (dnaN). Stimulates hydrolysis of ATP-DnaA to ADP-DnaA, rendering DnaA inactive for reinitiation, a process called regulatory inhibition of DnaA or RIDA. This is DnaA regulatory inactivator Hda from Proteus mirabilis (strain HI4320).